We begin with the raw amino-acid sequence, 866 residues long: Thiamine diphosphate dependent-3-acetyloctanal synthase PigD (866 aa).

Positions 826-866 (KGWQRDPSDREALQERKDWAARQPESTSTSFDQGQNKEAIS) are disordered. A compositionally biased stretch (basic and acidic residues) spans 828–845 (WQRDPSDREALQERKDWA). The segment covering 849–866 (PESTSTSFDQGQNKEAIS) has biased composition (polar residues).

This sequence belongs to the TPP enzyme family. The cofactor is thiamine diphosphate.

The enzyme catalyses (2E)-octenal + pyruvate + H(+) = (S)-3-acetyloctanal + CO2. Its pathway is antibiotic biosynthesis; prodigiosin biosynthesis. Involved in the biosynthesis of 2-methyl-3-n-amyl-pyrrole (MAP), one of the terminal products involved in the biosynthesis of the red antibiotic prodigiosin (Pig). Catalyzes the decarboxylation of pyruvate, followed by the modification of the resulting two-carbon fragment acetaldehyde at the C3 position of the 2-octenal (1,2-addition of acetaldehyde) giving 3-acetyloctanal. In Serratia sp. (strain ATCC 39006) (Prodigiosinella confusarubida), this protein is Thiamine diphosphate dependent-3-acetyloctanal synthase PigD.